The sequence spans 94 residues: Co-chaperonin GroES (94 aa).

The protein belongs to the GroES chaperonin family. Heptamer of 7 subunits arranged in a ring. Interacts with the chaperonin GroEL.

It is found in the cytoplasm. In terms of biological role, together with the chaperonin GroEL, plays an essential role in assisting protein folding. The GroEL-GroES system forms a nano-cage that allows encapsulation of the non-native substrate proteins and provides a physical environment optimized to promote and accelerate protein folding. GroES binds to the apical surface of the GroEL ring, thereby capping the opening of the GroEL channel. This Streptococcus equinus (Streptococcus bovis) protein is Co-chaperonin GroES.